The sequence spans 184 residues: C-phycoerythrin beta chain (184 aa).

Cysteine 48 and cysteine 59 together coordinate (2R,3E)-phycoerythrobilin. At asparagine 70 the chain carries N4-methylasparagine. Residues cysteine 80 and cysteine 165 each coordinate (2R,3E)-phycoerythrobilin.

This sequence belongs to the phycobiliprotein family. As to quaternary structure, heterodimer of an alpha and a beta chain. In terms of processing, contains three covalently linked bilin chromophores.

It localises to the cellular thylakoid membrane. Light-harvesting photosynthetic bile pigment-protein from the phycobiliprotein complex. The protein is C-phycoerythrin beta chain (cpeB) of Microchaete diplosiphon (Fremyella diplosiphon).